Reading from the N-terminus, the 232-residue chain is Ribosomal RNA small subunit methyltransferase G (232 aa).

S-adenosyl-L-methionine-binding positions include G93, L98, 144–145 (VE), and R163.

It belongs to the methyltransferase superfamily. RNA methyltransferase RsmG family.

The protein resides in the cytoplasm. The enzyme catalyses guanosine(527) in 16S rRNA + S-adenosyl-L-methionine = N(7)-methylguanosine(527) in 16S rRNA + S-adenosyl-L-homocysteine. In terms of biological role, specifically methylates the N7 position of guanine in position 527 of 16S rRNA. The chain is Ribosomal RNA small subunit methyltransferase G from Burkholderia pseudomallei (strain 668).